The chain runs to 355 residues: tRNA uridine(34) hydroxylase (355 aa).

Residues 146 to 240 (DDPDTVFVDM…YARQAKAQGL (95 aa)) enclose the Rhodanese domain. The Cysteine persulfide intermediate role is filled by Cys200.

It belongs to the TrhO family.

The catalysed reaction is uridine(34) in tRNA + AH2 + O2 = 5-hydroxyuridine(34) in tRNA + A + H2O. Functionally, catalyzes oxygen-dependent 5-hydroxyuridine (ho5U) modification at position 34 in tRNAs. This is tRNA uridine(34) hydroxylase from Pectobacterium carotovorum subsp. carotovorum (strain PC1).